A 525-amino-acid chain; its full sequence is Adenosine deaminase AGSA (525 aa).

The signal sequence occupies residues 1 to 25 (MSSFSTHNFVAIATFVCWFCCLATA). The N-linked (GlcNAc...) asparagine glycan is linked to Asn-81. Zn(2+) is bound by residues His-117 and His-119. Asp-120 lines the substrate pocket. Residue Asn-132 is glycosylated (N-linked (GlcNAc...) asparagine). Cys-142 and Cys-163 form a disulfide bridge. N-linked (GlcNAc...) asparagine glycosylation occurs at Asn-188. Residues 207–214 (WVRFNKYF) and Gly-329 contribute to the substrate site. N-linked (GlcNAc...) asparagine glycosylation is present at Asn-334. His-361 contributes to the Zn(2+) binding site. Residue Glu-364 is the Proton donor of the active site. Residue His-389 is the Proton acceptor of the active site. A Zn(2+)-binding site is contributed by Asp-446. Residue Asp-447 participates in substrate binding.

Belongs to the metallo-dependent hydrolases superfamily. Adenosine and AMP deaminases family. ADGF subfamily. The cofactor is Zn(2+). In terms of tissue distribution, detected in egg cordons and in the developing central nervous system. Not detected in adult central nervous system (at protein level). Atrial gland.

Its subcellular location is the secreted. It catalyses the reaction adenosine + H2O + H(+) = inosine + NH4(+). Functionally, adenosine deaminase that may contribute to the degradation of extracellular adenosine, a signaling molecule that controls a variety of cellular responses. May play a role in the regulation of cell proliferation. The sequence is that of Adenosine deaminase AGSA from Aplysia californica (California sea hare).